A 1111-amino-acid chain; its full sequence is Kinesin-like protein KIP1 (1111 aa).

The segment covering 1–11 (MARSSLPNRRT) has biased composition (polar residues). The disordered stretch occupies residues 1–34 (MARSSLPNRRTAQFEANKRRTIAHAPSPSLSNGM). Positions 52–410 (NIHVYVRCRS…LEYATRAKSI (359 aa)) constitute a Kinesin motor domain. 141 to 148 (GQTGTGKT) contributes to the ATP binding site. Coiled coils occupy residues 424 to 510 (TCLK…IIQN), 648 to 670 (KDLN…DIKS), 710 to 780 (KLIK…DQDI), and 808 to 828 (HNAE…TNDL). Over residues 1007-1016 (AENKSKDDTS) the composition is skewed to basic and acidic residues. The segment at 1007–1111 (AENKSKDDTS…DILQNKKLHQ (105 aa)) is disordered. Polar residues-rich tracts occupy residues 1017 to 1038 (NSRT…QFSP) and 1057 to 1082 (SINS…SQNN).

This sequence belongs to the TRAFAC class myosin-kinesin ATPase superfamily. Kinesin family. BimC subfamily. Might be dimeric.

It localises to the cytoplasm. It is found in the cytoskeleton. The protein resides in the spindle. Required for assembly of the mitotic spindle. Interacts with spindle microtubules to produce an outwardly directed force acting upon the poles. Following spindle assembly, CIN8 and KIP1 apparently act to oppose a force that draws separated poles back together. This force seems to be mediate by KAR3. The chain is Kinesin-like protein KIP1 (KIP1) from Saccharomyces cerevisiae (strain ATCC 204508 / S288c) (Baker's yeast).